The following is a 743-amino-acid chain: UvrABC system protein C (743 aa).

Residues 16–95 (VDPGVYKFRD…IKEFDPRFNV (80 aa)) enclose the GIY-YIG domain. Residues 208-243 (DKLVRQLEARMQQASEELDFETAARLRDDVGALRRA) enclose the UVR domain. Disordered regions lie at residues 497–543 (AEAA…QTGR) and 694–743 (PSAD…TGVE). The segment covering 506 to 520 (QASDTDGDQVSDTDG) has biased composition (acidic residues). Positions 734–743 (QSASQRTGVE) are enriched in polar residues.

Belongs to the UvrC family. Interacts with UvrB in an incision complex.

It is found in the cytoplasm. Its function is as follows. The UvrABC repair system catalyzes the recognition and processing of DNA lesions. UvrC both incises the 5' and 3' sides of the lesion. The N-terminal half is responsible for the 3' incision and the C-terminal half is responsible for the 5' incision. This Rhodococcus opacus (strain B4) protein is UvrABC system protein C.